The following is a 119-amino-acid chain: Beta-2-microglobulin (119 aa).

An N-terminal signal peptide occupies residues 1-21 (MGKAAAVVLVTLVALLGLAQA). Residues 25–113 (PKVQVYSRFP…HETLKEPQVY (89 aa)) enclose the Ig-like C1-type domain. C45 and C100 form a disulfide bridge.

It belongs to the beta-2-microglobulin family. In terms of assembly, heterodimer of an alpha chain and a beta chain. Beta-2-microglobulin is the beta-chain of major histocompatibility complex class I molecules.

It is found in the secreted. In terms of biological role, component of the class I major histocompatibility complex (MHC). Involved in the presentation of peptide antigens to the immune system. This is Beta-2-microglobulin (B2M) from Gallus gallus (Chicken).